A 1214-amino-acid polypeptide reads, in one-letter code: Formin-D (1214 aa).

Positions 10–379 constitute a GBD/FH3 domain; that stretch reads KKEESPQSID…KMNNGESYLD (370 aa). Residues 401–448 are a coiled coil; that stretch reads SGEKAVLIQKEIEDLKKQKKRDQDKLAEKDKLLTKLAKRMRKMEEAIK. The 88-residue stretch at 457 to 544 folds into the FH1 domain; the sequence is NNQIEIESPP…GSGDGIPLPP (88 aa). 2 stretches are compositionally biased toward polar residues: residues 462–479 and 518–534; these read IESP…TTPG and LDTT…QTEA. Disordered stretches follow at residues 462 to 490, 507 to 569, 868 to 948, 1026 to 1045, 1054 to 1089, and 1133 to 1214; these read IESP…TSPV, APNG…SRPP, PKSV…PLKD, DKST…IKKS, LKKI…DDED, and MNLQ…EGEN. The span at 541–554 shows a compositional bias: pro residues; it reads PLPPGAPPPPPPPG. The 476-residue stretch at 562-1037 folds into the FH2 domain; that stretch reads PQLCSRPPSI…STQRKNEKER (476 aa). The segment covering 868–877 has biased composition (basic and acidic residues); sequence PKSVEPKPDD. Polar residues predominate over residues 930–940; that stretch reads QVNTNSTSDSK. A coiled-coil region spans residues 1019–1056; that stretch reads EIEKSIKDKSTQRKNEKERKEMEIKKSKLEMIHSKLKK. Polar residues predominate over residues 1059 to 1071; it reads SPSSSNRILASNE. Residues 1065-1095 enclose the DAD domain; sequence RILASNESSPTSSTSSVVHQHDDEDEETIKE. Residues 1161–1171 are compositionally biased toward low complexity; it reads SSTYSSISSIY. The span at 1174–1214 shows a compositional bias: acidic residues; it reads EPLDMSDQEDEDEEEEEDEEEEEEEEEGDDDNDNDEEEGEN. Positions 1176–1207 form a coiled coil; it reads LDMSDQEDEDEEEEEDEEEEEEEEEGDDDNDN.

It belongs to the formin homology family. Diaphanous subfamily. As to quaternary structure, interacts (via GBD/FH3 domain) with activated Rho-GTPases.

In terms of biological role, formins play an important role in the nucleation of actin and the formation of linear actin filaments. The chain is Formin-D (forD) from Dictyostelium discoideum (Social amoeba).